A 419-amino-acid polypeptide reads, in one-letter code: Peroxisomal membrane protein PMP47B (419 aa).

Solcar repeat units lie at residues 6–120 (YDDL…TGKT), 142–230 (LSVW…LKSF), and 239–369 (VTPV…LLIL). Residues 12–32 (AFAGAGGGLLSMTLTYPLVTL) form a helical membrane-spanning segment. Positions 44-53 (KNEEEEKENS) are enriched in basic and acidic residues. Residues 44–69 (KNEEEEKENSNEDGSLSPKSSNTSNI) form a disordered region. Residues 56-69 (DGSLSPKSSNTSNI) are compositionally biased toward polar residues. A run of 3 helical transmembrane segments spans residues 98 to 118 (SALF…ELTG), 204 to 224 (FTGI…YTIF), and 245 to 265 (LLLG…YITL). The tract at residues 274–305 (MTENNEDSEKERTDSVQSLPEDGSDEDNSKEN) is disordered. A run of 2 helical transmembrane segments spans residues 310 to 330 (TINK…IIGY) and 349 to 369 (LLQS…LLIL).

It belongs to the mitochondrial carrier (TC 2.A.29) family.

It is found in the peroxisome membrane. Functionally, may have transport activity. This Candida boidinii (Yeast) protein is Peroxisomal membrane protein PMP47B (PMP47B).